The primary structure comprises 317 residues: Homoserine O-succinyltransferase (317 aa).

Catalysis depends on Cys-142, which acts as the Acyl-thioester intermediate. Lys-163 and Ser-192 together coordinate substrate. The Proton acceptor role is filled by His-235. Glu-237 is an active-site residue. Arg-249 contacts substrate.

This sequence belongs to the MetA family.

The protein resides in the cytoplasm. The enzyme catalyses L-homoserine + succinyl-CoA = O-succinyl-L-homoserine + CoA. It participates in amino-acid biosynthesis; L-methionine biosynthesis via de novo pathway; O-succinyl-L-homoserine from L-homoserine: step 1/1. Transfers a succinyl group from succinyl-CoA to L-homoserine, forming succinyl-L-homoserine. The sequence is that of Homoserine O-succinyltransferase from Aeromonas hydrophila subsp. hydrophila (strain ATCC 7966 / DSM 30187 / BCRC 13018 / CCUG 14551 / JCM 1027 / KCTC 2358 / NCIMB 9240 / NCTC 8049).